We begin with the raw amino-acid sequence, 140 residues long: Nucleoside diphosphate kinase (140 aa).

6 residues coordinate ATP: Lys11, Phe59, Arg87, Thr93, Arg104, and Asn114. The active-site Pros-phosphohistidine intermediate is His117.

It belongs to the NDK family. Homotetramer. Mg(2+) is required as a cofactor.

It is found in the cytoplasm. The enzyme catalyses a 2'-deoxyribonucleoside 5'-diphosphate + ATP = a 2'-deoxyribonucleoside 5'-triphosphate + ADP. The catalysed reaction is a ribonucleoside 5'-diphosphate + ATP = a ribonucleoside 5'-triphosphate + ADP. Its function is as follows. Major role in the synthesis of nucleoside triphosphates other than ATP. The ATP gamma phosphate is transferred to the NDP beta phosphate via a ping-pong mechanism, using a phosphorylated active-site intermediate. In Bartonella henselae (strain ATCC 49882 / DSM 28221 / CCUG 30454 / Houston 1) (Rochalimaea henselae), this protein is Nucleoside diphosphate kinase.